Here is a 66-residue protein sequence, read N- to C-terminus: Large ribosomal subunit protein bL33c (66 aa).

This sequence belongs to the bacterial ribosomal protein bL33 family.

The protein localises to the plastid. It localises to the chloroplast. The sequence is that of Large ribosomal subunit protein bL33c from Populus alba (White poplar).